Here is a 212-residue protein sequence, read N- to C-terminus: Orotate phosphoribosyltransferase (212 aa).

Residues Arg94, Lys98, His100, and 120-128 each bind 5-phospho-alpha-D-ribose 1-diphosphate; that span reads EDLISTGGS. Position 124 (Ser124) interacts with orotate.

It belongs to the purine/pyrimidine phosphoribosyltransferase family. PyrE subfamily. Homodimer. Mg(2+) serves as cofactor.

The catalysed reaction is orotidine 5'-phosphate + diphosphate = orotate + 5-phospho-alpha-D-ribose 1-diphosphate. It participates in pyrimidine metabolism; UMP biosynthesis via de novo pathway; UMP from orotate: step 1/2. Functionally, catalyzes the transfer of a ribosyl phosphate group from 5-phosphoribose 1-diphosphate to orotate, leading to the formation of orotidine monophosphate (OMP). This is Orotate phosphoribosyltransferase from Bacillus pumilus (strain SAFR-032).